A 372-amino-acid polypeptide reads, in one-letter code: Beta sliding clamp (372 aa).

This sequence belongs to the beta sliding clamp family. Forms a ring-shaped head-to-tail homodimer around DNA which binds and tethers DNA polymerases and other proteins to the DNA. The DNA replisome complex has a single clamp-loading complex (3 tau and 1 each of delta, delta', psi and chi subunits) which binds 3 Pol III cores (1 core on the leading strand and 2 on the lagging strand) each with a beta sliding clamp dimer. Additional proteins in the replisome are other copies of gamma, psi and chi, Ssb, DNA helicase and RNA primase.

The protein resides in the cytoplasm. Its function is as follows. Confers DNA tethering and processivity to DNA polymerases and other proteins. Acts as a clamp, forming a ring around DNA (a reaction catalyzed by the clamp-loading complex) which diffuses in an ATP-independent manner freely and bidirectionally along dsDNA. Initially characterized for its ability to contact the catalytic subunit of DNA polymerase III (Pol III), a complex, multichain enzyme responsible for most of the replicative synthesis in bacteria; Pol III exhibits 3'-5' exonuclease proofreading activity. The beta chain is required for initiation of replication as well as for processivity of DNA replication. The chain is Beta sliding clamp (dnaN) from Caulobacter vibrioides (strain ATCC 19089 / CIP 103742 / CB 15) (Caulobacter crescentus).